Here is an 88-residue protein sequence, read N- to C-terminus: uncharacterized protein (88 aa).

The next 2 helical transmembrane spans lie at leucine 27–histidine 46 and serine 61–isoleucine 83.

The protein resides in the membrane. This is an uncharacterized protein from Saccharomyces cerevisiae (strain ATCC 204508 / S288c) (Baker's yeast).